The following is a 171-amino-acid chain: 3-hydroxydecanoyl-[acyl-carrier-protein] dehydratase (171 aa).

The active site involves H70.

The protein belongs to the thioester dehydratase family. FabA subfamily. Homodimer.

Its subcellular location is the cytoplasm. It carries out the reaction a (3R)-hydroxyacyl-[ACP] = a (2E)-enoyl-[ACP] + H2O. The enzyme catalyses (3R)-hydroxydecanoyl-[ACP] = (2E)-decenoyl-[ACP] + H2O. The catalysed reaction is (2E)-decenoyl-[ACP] = (3Z)-decenoyl-[ACP]. The protein operates within lipid metabolism; fatty acid biosynthesis. Necessary for the introduction of cis unsaturation into fatty acids. Catalyzes the dehydration of (3R)-3-hydroxydecanoyl-ACP to E-(2)-decenoyl-ACP and then its isomerization to Z-(3)-decenoyl-ACP. Can catalyze the dehydratase reaction for beta-hydroxyacyl-ACPs with saturated chain lengths up to 16:0, being most active on intermediate chain length. The polypeptide is 3-hydroxydecanoyl-[acyl-carrier-protein] dehydratase (Shewanella sediminis (strain HAW-EB3)).